Consider the following 485-residue polypeptide: E3 ubiquitin-protein ligase TRIM34B (485 aa).

The segment at 15-58 (CPVCQELLTKALSLGCGHLVCQACLISNKNAVINPRGKSSCPVC) adopts an RING-type zinc-finger fold. The B box-type zinc finger occupies 91–127 (TKRDLCVHHGEKLLLFCKEDKKVICWVCERSQEHRGH). The Zn(2+) site is built by Cys-96, His-99, Cys-118, and His-124. Positions 136 to 170 (VRECQENLQKALTRLRKEQEKVETLEADIKEDRLS) form a coiled coil. Residues 282-485 (LSGMLQKFRE…APMTLCPLNS (204 aa)) form the B30.2/SPRY domain.

The protein belongs to the TRIM/RBCC family. As to quaternary structure, homotrimer. Interacts (via B-box and SPRY domain) with TRIM5.

The protein localises to the cytoplasm. The protein resides in the mitochondrion. The enzyme catalyses S-ubiquitinyl-[E2 ubiquitin-conjugating enzyme]-L-cysteine + [acceptor protein]-L-lysine = [E2 ubiquitin-conjugating enzyme]-L-cysteine + N(6)-ubiquitinyl-[acceptor protein]-L-lysine.. Its pathway is protein modification; protein ubiquitination. Functions as antiviral protein and contributes to the defense against retroviral infections. Acts as a capsid-specific restriction factor with the help of TRIM5 and prevents infection from non-host-adapted retroviruses. During influenza A virus infection, promotes programmed cell death by targeting ZBP1 for 'Lys-63'-linked polyubiquitination. In turn, promotes ZBP1 recruitment of RIPK3 to mediate virus-induced programmed necrosis. Negatively regulates the function of mitochondria by enhancing mitochondrial depolarization leading to cytochrome c release and mitochondria-dependent apoptosis. Also promotes the formation of multinucleated giant cells by means of cell fusion and phagocytosis in epithelial cells. Regulates intestinal inflammation by controlling the exocytosis of the major component of colonic mucus MUC2 from colonic goblet cells. This Mus musculus (Mouse) protein is E3 ubiquitin-protein ligase TRIM34B.